Reading from the N-terminus, the 400-residue chain is Deoxyguanosinetriphosphate triphosphohydrolase-like protein (400 aa).

Residues arginine 76 to cysteine 204 enclose the HD domain.

Belongs to the dGTPase family. Type 2 subfamily.

The sequence is that of Deoxyguanosinetriphosphate triphosphohydrolase-like protein from Syntrophus aciditrophicus (strain SB).